The chain runs to 277 residues: Energy-coupling factor transporter ATP-binding protein EcfA1 (277 aa).

Positions 4 to 238 (IETKNLNYSY…SELLSKNDLK (235 aa)) constitute an ABC transporter domain. 38–45 (GKNGSGKS) is an ATP binding site.

It belongs to the ABC transporter superfamily. Energy-coupling factor EcfA family. In terms of assembly, forms a stable energy-coupling factor (ECF) transporter complex composed of 2 membrane-embedded substrate-binding proteins (S component), 2 ATP-binding proteins (A component) and 2 transmembrane proteins (T component).

Its subcellular location is the cell membrane. Functionally, ATP-binding (A) component of a common energy-coupling factor (ECF) ABC-transporter complex. Unlike classic ABC transporters this ECF transporter provides the energy necessary to transport a number of different substrates. The protein is Energy-coupling factor transporter ATP-binding protein EcfA1 of Oenococcus oeni (strain ATCC BAA-331 / PSU-1).